The primary structure comprises 427 residues: MKLRTNAGPLQGTIQVPGDKSISHRAVILGAVAKGETRVKGLLKGEDVLSTIQAFRNLGVRIEEKDDQLVIEGQGFQGLTAPCQTLNMGNSGTSMRLIAGLLAGQPFSVKMIGDESLSKRPMDRIVYPLKQMGVEISGETDRQFPPLQLQGNRNLQPITYTLPISSAQVKSAILLAALQAKGTTQVVEKEITRNHTEEMIQQFGGRLIVDGKRITLVGPQQLTAQEITVPGDISSAAFWLVAGLIIPGSELLLKNVGVNPTRTGILEVVEKMGAQIVYEDMNKKEQVTSIRVVYSRLKGTIISGGLIPRLIDELPIIALLATQAQGTTCIKDAQELRVKETDRIQVVTDTLNSMGANIKATADGMIIKGPTVLYGANTSTYGDHRIGMMTAIAALLVKQGQVHLDKEEAIMTSYPTFFKDLERLCHD.

3-phosphoshikimate contacts are provided by K20, S21, and R25. Phosphoenolpyruvate is bound at residue K20. Positions 92 and 120 each coordinate phosphoenolpyruvate. The 3-phosphoshikimate site is built by S166, Q168, D312, and K339. Q168 contributes to the phosphoenolpyruvate binding site. D312 serves as the catalytic Proton acceptor. Positions 343 and 385 each coordinate phosphoenolpyruvate.

Belongs to the EPSP synthase family. Monomer.

The protein resides in the cytoplasm. The catalysed reaction is 3-phosphoshikimate + phosphoenolpyruvate = 5-O-(1-carboxyvinyl)-3-phosphoshikimate + phosphate. The protein operates within metabolic intermediate biosynthesis; chorismate biosynthesis; chorismate from D-erythrose 4-phosphate and phosphoenolpyruvate: step 6/7. Catalyzes the transfer of the enolpyruvyl moiety of phosphoenolpyruvate (PEP) to the 5-hydroxyl of shikimate-3-phosphate (S3P) to produce enolpyruvyl shikimate-3-phosphate and inorganic phosphate. This chain is 3-phosphoshikimate 1-carboxyvinyltransferase, found in Streptococcus pyogenes serotype M49 (strain NZ131).